Consider the following 528-residue polypeptide: Major facilitator superfamily multidrug transporter mdr3 (528 aa).

The interval 1-37 (MLAMAASAEETNRQSNAGRRSVISPSEAPPEAEQSDV) is disordered. 7 helical membrane-spanning segments follow: residues 50–70 (FILI…YILI), 91–111 (WHVG…GKLG), 119–139 (ILVL…CSAF), 149–169 (ARAL…AIAG), 180–200 (MIFS…GVVG), 211–231 (WVMW…LWVI), and 241–261 (AATL…LLLL). An N-linked (GlcNAc...) asparagine glycan is attached at Asn262. 5 consecutive transmembrane segments (helical) span residues 272 to 292 (GWST…LGLF), 340 to 360 (VITS…GCIL), 375 to 395 (FWSF…STTI), 410 to 430 (SLVN…AGTV), and 448 to 468 (ALWS…VFAV).

Belongs to the major facilitator superfamily.

It localises to the cell membrane. Its function is as follows. Major facilitator superfamily transporter that confers resistance to azoles such as itraconazole. The sequence is that of Major facilitator superfamily multidrug transporter mdr3 from Aspergillus fumigatus (strain ATCC MYA-4609 / CBS 101355 / FGSC A1100 / Af293) (Neosartorya fumigata).